A 462-amino-acid chain; its full sequence is Kinetochore protein Nuf2-B (462 aa).

A coiled-coil region spans residues 143–462; the sequence is SGYKSALENV…AELNRRLSRQ (320 aa). The segment at 236-259 is disordered; the sequence is EQERMKSQIVESPEQRKSKTERMK. The segment covering 248-259 has biased composition (basic and acidic residues); the sequence is PEQRKSKTERMK.

It belongs to the NUF2 family. In terms of assembly, component of the NDC80 complex, which is composed of ndc80, cdca1, spbc24 and spbc25. The NDC80 complex interacts with mis12 and zwint.

The protein localises to the nucleus. The protein resides in the chromosome. Its subcellular location is the centromere. It localises to the kinetochore. Functionally, acts as a component of the essential kinetochore-associated NDC80 complex, which is required for chromosome segregation and spindle checkpoint activity. Required for kinetochore integrity and the organization of stable microtubule binding sites in the outer plate of the kinetochore. The NDC80 complex synergistically enhances the affinity of the SKA1 complex for microtubules and may allow the NDC80 complex to track depolymerizing microtubules. The protein is Kinetochore protein Nuf2-B (nuf2-b) of Xenopus laevis (African clawed frog).